The primary structure comprises 227 residues: 2,3-bisphosphoglycerate-dependent phosphoglycerate mutase (227 aa).

Substrate is bound by residues 8–15 (RHGKSVWN), 21–22 (TG), R58, 110–113 (ERMY), K121, 137–138 (RR), and 181–182 (GN). The active-site Tele-phosphohistidine intermediate is the H9. Catalysis depends on E110, which acts as the Proton donor/acceptor.

It belongs to the phosphoglycerate mutase family. BPG-dependent PGAM subfamily.

The enzyme catalyses (2R)-2-phosphoglycerate = (2R)-3-phosphoglycerate. It functions in the pathway carbohydrate degradation; glycolysis; pyruvate from D-glyceraldehyde 3-phosphate: step 3/5. Its function is as follows. Catalyzes the interconversion of 2-phosphoglycerate and 3-phosphoglycerate. This is 2,3-bisphosphoglycerate-dependent phosphoglycerate mutase from Chlamydia caviae (strain ATCC VR-813 / DSM 19441 / 03DC25 / GPIC) (Chlamydophila caviae).